We begin with the raw amino-acid sequence, 900 residues long: Alpha-actinin-3 (900 aa).

An N-acetylmethionine modification is found at methionine 1. The segment at 1-26 (MMMVMQPEGLGAGEGPFSGGGGGEYM) is disordered. The tract at residues 1–260 (MMMVMQPEGL…IMTYVSCFYH (260 aa)) is actin-binding. Residues 10–24 (LGAGEGPFSGGGGGE) are compositionally biased toward gly residues. Calponin-homology (CH) domains lie at 44–148 (KQQR…LRFA) and 157–263 (TSAK…HAFA). 4 Spectrin repeats span residues 287 to 397 (KLME…WLLS), 407 to 512 (HLAE…ALER), 522 to 633 (QLQL…TLQE), and 643 to 746 (RLRR…EVEN). 2 consecutive EF-hand domains span residues 759-794 (EQLN…MGYD) and 795-830 (LGEV…ETAE). Ca(2+)-binding residues include aspartate 772, asparagine 776, methionine 778, aspartate 783, aspartate 808, and asparagine 810.

It belongs to the alpha-actinin family. In terms of assembly, homodimer; antiparallel. Also forms heterodimers with ACTN2. Interacts with MYOZ1. In terms of tissue distribution, expression restricted to skeletal muscle fast (type 2) fibers (at protein level).

Functionally, F-actin cross-linking protein which is thought to anchor actin to a variety of intracellular structures. This is a bundling protein. This is Alpha-actinin-3 (Actn3) from Mus musculus (Mouse).